Consider the following 318-residue polypeptide: Cytochrome c biogenesis protein CcsA (318 aa).

The next 8 membrane-spanning stretches (helical) occupy residues 17-37 (VLAL…ISFW), 45-65 (SAVV…QLVL), 75-95 (ISNL…AQLL), 104-124 (IVSA…SFAL), 149-169 (VIMC…AVLF), 224-244 (TITV…VWAN), 258-275 (TWAL…HTRF), and 287-307 (VAVA…LLGI).

Belongs to the CcmF/CycK/Ccl1/NrfE/CcsA family. As to quaternary structure, may interact with ccs1.

It localises to the cellular thylakoid membrane. Its function is as follows. Required during biogenesis of c-type cytochromes (cytochrome c6 and cytochrome f) at the step of heme attachment. The protein is Cytochrome c biogenesis protein CcsA of Prochlorococcus marinus (strain MIT 9313).